A 155-amino-acid chain; its full sequence is SsrA-binding protein (155 aa).

The protein belongs to the SmpB family.

The protein localises to the cytoplasm. Required for rescue of stalled ribosomes mediated by trans-translation. Binds to transfer-messenger RNA (tmRNA), required for stable association of tmRNA with ribosomes. tmRNA and SmpB together mimic tRNA shape, replacing the anticodon stem-loop with SmpB. tmRNA is encoded by the ssrA gene; the 2 termini fold to resemble tRNA(Ala) and it encodes a 'tag peptide', a short internal open reading frame. During trans-translation Ala-aminoacylated tmRNA acts like a tRNA, entering the A-site of stalled ribosomes, displacing the stalled mRNA. The ribosome then switches to translate the ORF on the tmRNA; the nascent peptide is terminated with the 'tag peptide' encoded by the tmRNA and targeted for degradation. The ribosome is freed to recommence translation, which seems to be the essential function of trans-translation. This chain is SsrA-binding protein, found in Lawsonia intracellularis (strain PHE/MN1-00).